The primary structure comprises 337 residues: Phosphate acyltransferase (337 aa).

This sequence belongs to the PlsX family. As to quaternary structure, homodimer. Probably interacts with PlsY.

The protein resides in the cytoplasm. The catalysed reaction is a fatty acyl-[ACP] + phosphate = an acyl phosphate + holo-[ACP]. It functions in the pathway lipid metabolism; phospholipid metabolism. In terms of biological role, catalyzes the reversible formation of acyl-phosphate (acyl-PO(4)) from acyl-[acyl-carrier-protein] (acyl-ACP). This enzyme utilizes acyl-ACP as fatty acyl donor, but not acyl-CoA. This Acidobacterium capsulatum (strain ATCC 51196 / DSM 11244 / BCRC 80197 / JCM 7670 / NBRC 15755 / NCIMB 13165 / 161) protein is Phosphate acyltransferase.